The following is a 442-amino-acid chain: uncharacterized protein (442 aa).

One can recognise an ABC transporter domain in the interval 1–238 (MKAEGLSGGY…QSIKAVYDTD (238 aa)). 33–40 (GPNGSGKT) contributes to the ATP binding site.

Belongs to the ABC transporter superfamily. In terms of assembly, the complex is composed of two ATP-binding proteins (YvrA), two transmembrane proteins (YvrB) and a solute-binding protein (YvrC).

In terms of biological role, probably part of an ABC transporter complex. Probably responsible for energy coupling to the transport system. This is an uncharacterized protein from Bacillus subtilis (strain 168).